We begin with the raw amino-acid sequence, 337 residues long: Biotin synthase (337 aa).

One can recognise a Radical SAM core domain in the interval 58-288 (AGSELLHACS…AHPHKIIKFA (231 aa)). Residues Cys-76, Cys-80, and Cys-83 each coordinate [4Fe-4S] cluster. The [2Fe-2S] cluster site is built by Cys-155, Cys-216, and Lys-286.

Belongs to the radical SAM superfamily. Biotin synthase family. Homodimer. The cofactor is [4Fe-4S] cluster. It depends on [2Fe-2S] cluster as a cofactor.

The catalysed reaction is (4R,5S)-dethiobiotin + (sulfur carrier)-SH + 2 reduced [2Fe-2S]-[ferredoxin] + 2 S-adenosyl-L-methionine = (sulfur carrier)-H + biotin + 2 5'-deoxyadenosine + 2 L-methionine + 2 oxidized [2Fe-2S]-[ferredoxin]. The protein operates within cofactor biosynthesis; biotin biosynthesis; biotin from 7,8-diaminononanoate: step 2/2. In terms of biological role, catalyzes the conversion of dethiobiotin (DTB) to biotin by the insertion of a sulfur atom into dethiobiotin via a radical-based mechanism. This is Biotin synthase from Pelodictyon phaeoclathratiforme (strain DSM 5477 / BU-1).